Consider the following 480-residue polypeptide: tRNA-2-methylthio-N(6)-dimethylallyladenosine synthase (480 aa).

The region spanning 31–151 (RGLHVITWGC…LPEMVARAAR (121 aa)) is the MTTase N-terminal domain. The [4Fe-4S] cluster site is built by C40, C76, C114, C192, C196, and C199. Residues 178–410 (SPGGITSFLT…QALLRTQQDA (233 aa)) enclose the Radical SAM core domain. The TRAM domain maps to 413-475 (DGTVGHVVPV…TNSLSGTLVQ (63 aa)).

It belongs to the methylthiotransferase family. MiaB subfamily. In terms of assembly, monomer. [4Fe-4S] cluster is required as a cofactor.

It localises to the cytoplasm. It catalyses the reaction N(6)-dimethylallyladenosine(37) in tRNA + (sulfur carrier)-SH + AH2 + 2 S-adenosyl-L-methionine = 2-methylsulfanyl-N(6)-dimethylallyladenosine(37) in tRNA + (sulfur carrier)-H + 5'-deoxyadenosine + L-methionine + A + S-adenosyl-L-homocysteine + 2 H(+). Catalyzes the methylthiolation of N6-(dimethylallyl)adenosine (i(6)A), leading to the formation of 2-methylthio-N6-(dimethylallyl)adenosine (ms(2)i(6)A) at position 37 in tRNAs that read codons beginning with uridine. The chain is tRNA-2-methylthio-N(6)-dimethylallyladenosine synthase from Gluconacetobacter diazotrophicus (strain ATCC 49037 / DSM 5601 / CCUG 37298 / CIP 103539 / LMG 7603 / PAl5).